A 330-amino-acid chain; its full sequence is Ferredoxin--NADP reductase (330 aa).

FAD is bound by residues Glu35, Gln43, Tyr48, Val90, Phe123, Asp285, and Thr326.

Belongs to the ferredoxin--NADP reductase type 2 family. As to quaternary structure, homodimer. Requires FAD as cofactor.

The enzyme catalyses 2 reduced [2Fe-2S]-[ferredoxin] + NADP(+) + H(+) = 2 oxidized [2Fe-2S]-[ferredoxin] + NADPH. This is Ferredoxin--NADP reductase from Streptococcus pyogenes serotype M1.